The primary structure comprises 514 residues: Embryonic protein UVS.2 (514 aa).

The N-terminal stretch at 1 to 19 is a signal peptide; it reads MDVKISAILLACIIQYAVS. Residues 90–286 form the Peptidase M12A domain; it reads SAINDARFLW…SKINKLYECN (197 aa). Asn112 carries an N-linked (GlcNAc...) asparagine glycan. Disulfide bonds link Cys137–Cys285, Cys158–Cys178, Cys288–Cys314, Cys340–Cys363, Cys402–Cys428, and Cys455–Cys475. His186 is a binding site for Zn(2+). Residue Glu187 is part of the active site. Residues His190 and His196 each coordinate Zn(2+). Asn199 carries an N-linked (GlcNAc...) asparagine glycan. 2 CUB domains span residues 288–400 and 402–513; these read CSNL…YGSI and CGGA…YTFV. 3 N-linked (GlcNAc...) asparagine glycosylation sites follow: Asn421, Asn427, and Asn464.

Zn(2+) is required as a cofactor.

The polypeptide is Embryonic protein UVS.2 (Xenopus laevis (African clawed frog)).